Consider the following 459-residue polypeptide: Ribulose bisphosphate carboxylase large chain (459 aa).

At K4 the chain carries N6,N6,N6-trimethyllysine. Residues N113 and T163 each coordinate substrate. K165 (proton acceptor) is an active-site residue. Residue K167 participates in substrate binding. Residues K191, D193, and E194 each coordinate Mg(2+). N6-carboxylysine is present on K191. H284 serves as the catalytic Proton acceptor. Positions 285, 317, and 369 each coordinate substrate.

Belongs to the RuBisCO large chain family. Type I subfamily. As to quaternary structure, heterohexadecamer of 8 large chains and 8 small chains; disulfide-linked. The disulfide link is formed within the large subunit homodimers. It depends on Mg(2+) as a cofactor. The disulfide bond which can form in the large chain dimeric partners within the hexadecamer appears to be associated with oxidative stress and protein turnover.

It is found in the plastid. The protein resides in the chloroplast. It catalyses the reaction 2 (2R)-3-phosphoglycerate + 2 H(+) = D-ribulose 1,5-bisphosphate + CO2 + H2O. It carries out the reaction D-ribulose 1,5-bisphosphate + O2 = 2-phosphoglycolate + (2R)-3-phosphoglycerate + 2 H(+). RuBisCO catalyzes two reactions: the carboxylation of D-ribulose 1,5-bisphosphate, the primary event in carbon dioxide fixation, as well as the oxidative fragmentation of the pentose substrate in the photorespiration process. Both reactions occur simultaneously and in competition at the same active site. In Apium graveolens (Celery), this protein is Ribulose bisphosphate carboxylase large chain.